We begin with the raw amino-acid sequence, 429 residues long: Trigger factor (429 aa).

The 86-residue stretch at 161–246 folds into the PPIase FKBP-type domain; sequence EDRVTIDFTG…LKKVEERELP (86 aa).

The protein belongs to the FKBP-type PPIase family. Tig subfamily. Homodimer and monomer. In vivo most of the ribosomes are in complex with monomeric TF. Uncomplexed TF, however, is in a monomer-dimer equilibrium with approximately two thirds of TF existing in a dimeric state.

It localises to the cytoplasm. It catalyses the reaction [protein]-peptidylproline (omega=180) = [protein]-peptidylproline (omega=0). Its function is as follows. Involved in protein export. Acts as a chaperone by maintaining the newly synthesized protein in an open conformation. Functions as a peptidyl-prolyl cis-trans isomerase. The protein is Trigger factor of Escherichia coli O45:K1 (strain S88 / ExPEC).